A 931-amino-acid polypeptide reads, in one-letter code: DNA mismatch repair protein MutS (931 aa).

The segment covering 1–10 (MMDDTAMPAR) has biased composition (low complexity). The interval 1–34 (MMDDTAMPARAEADAAEDELAAPAGIDRTAKADK) is disordered. 674 to 681 (GPNMAGKS) serves as a coordination point for ATP.

It belongs to the DNA mismatch repair MutS family.

Functionally, this protein is involved in the repair of mismatches in DNA. It is possible that it carries out the mismatch recognition step. This protein has a weak ATPase activity. This Azorhizobium caulinodans (strain ATCC 43989 / DSM 5975 / JCM 20966 / LMG 6465 / NBRC 14845 / NCIMB 13405 / ORS 571) protein is DNA mismatch repair protein MutS.